We begin with the raw amino-acid sequence, 333 residues long: Mitochondrial glycine transporter (333 aa).

Residues 1-25 (MTNAATDKSVASVARDVSTGKPGKS) form a disordered region. Solcar repeat units follow at residues 26 to 109 (PDAA…MRAA), 127 to 220 (LLPM…FKND), and 236 to 319 (RSSV…LIKS). Helical transmembrane passes span 32–57 (LLSGGLAGLTSAVTLQPFDLLKTRLQ), 84–110 (GAVPSALRTSVGAGLYFTTLSKMRAAV), 133–158 (LATGFVARAIVGYITMPITMVKTRFE), 195–218 (GSVATLARDCPYAGLYVLFYEGFK), 240–266 (INSSSAILAASVSTTITAPFDAIKTRL), and 294–312 (GLSLRFGRKALSAGISWCI).

Belongs to the mitochondrial carrier (TC 2.A.29) family. SLC25A38 subfamily.

The protein resides in the mitochondrion inner membrane. It catalyses the reaction glycine(in) = glycine(out). In terms of biological role, mitochondrial glycine transporter that imports glycine into the mitochondrial matrix. Plays an important role in providing glycine for the first enzymatic step in heme biosynthesis, the condensation of glycine with succinyl-CoA to produce 5-aminolevulinate (ALA) in the mitochondrial matrix. The polypeptide is Mitochondrial glycine transporter (Scheffersomyces stipitis (strain ATCC 58785 / CBS 6054 / NBRC 10063 / NRRL Y-11545) (Yeast)).